The chain runs to 614 residues: Jacalin-related lectin 14 (614 aa).

4 Jacalin-type lectin domains span residues 27–169, 172–314, 317–462, and 468–611; these read VQKM…YFSW, PRKM…YFTT, PTKS…YFSP, and AEKL…HVVP.

It belongs to the jacalin lectin family.

This chain is Jacalin-related lectin 14 (JAL14), found in Arabidopsis thaliana (Mouse-ear cress).